The chain runs to 258 residues: MGRGKVELKRIENKINRQVTFAKRRNGLLKKAYELSVLCDAEIALLIFSNRGKLYEFCSSPSGMARTVDKYRKHSYATMDPNQSAKDLQDKYQDYLKLKSRVEILQHSQRHLLGEELSEMDVNELEHLERQVDASLRQIRSTKARSMLDQLSDLKTKEEMLLETNRDLRRKLEDSDAALTQSFWGSSAAEQQQQHQQQQQGMSSYQSNPPIQEAGFFKPLQGNVALQMSSHYNHNPANATNSATTSQNVNGFFPGWMV.

Residues 3–57 (RGKVELKRIENKINRQVTFAKRRNGLLKKAYELSVLCDAEIALLIFSNRGKLYEF) form the MADS-box domain. Residues 88-178 (LQDKYQDYLK…RRKLEDSDAA (91 aa)) enclose the K-box domain. Residues 186-214 (SSAAEQQQQHQQQQQGMSSYQSNPPIQEA) form a disordered region. Over residues 191-200 (QQQQHQQQQQ) the composition is skewed to low complexity. A compositionally biased stretch (polar residues) spans 201–210 (GMSSYQSNPP).

As to quaternary structure, forms homodimers. Interacts with TT16/AGL32. As to expression, expressed in aerial vegetative organs and flowers, but not in roots. Expressed in flower primordia.

It is found in the nucleus. In terms of biological role, probable transcription factor that binds specifically to the CArG box DNA sequence 5'-CC (A/T)6 GG-3'. Plays an important role in the determination of flower meristem identity. Involved in the specification of sepal identity. Contributes to the development of petals, stamens and carpels. This is Agamous-like MADS-box protein AGL3 (AGL3) from Arabidopsis thaliana (Mouse-ear cress).